Reading from the N-terminus, the 178-residue chain is FMN reductase (NADH) RutF (178 aa).

The protein belongs to the non-flavoprotein flavin reductase family. RutF subfamily.

The catalysed reaction is FMNH2 + NAD(+) = FMN + NADH + 2 H(+). Catalyzes the reduction of FMN to FMNH2 which is used to reduce pyrimidine by RutA via the Rut pathway. This Pseudomonas syringae pv. syringae (strain B728a) protein is FMN reductase (NADH) RutF.